Here is an 89-residue protein sequence, read N- to C-terminus: Small ribosomal subunit protein uS15 (89 aa).

Belongs to the universal ribosomal protein uS15 family. As to quaternary structure, part of the 30S ribosomal subunit. Forms a bridge to the 50S subunit in the 70S ribosome, contacting the 23S rRNA.

Its function is as follows. One of the primary rRNA binding proteins, it binds directly to 16S rRNA where it helps nucleate assembly of the platform of the 30S subunit by binding and bridging several RNA helices of the 16S rRNA. In terms of biological role, forms an intersubunit bridge (bridge B4) with the 23S rRNA of the 50S subunit in the ribosome. This is Small ribosomal subunit protein uS15 from Sinorhizobium medicae (strain WSM419) (Ensifer medicae).